Here is a 108-residue protein sequence, read N- to C-terminus: Nucleoid-associated protein BMASAVP1_A1850 (108 aa).

The interval 84–108 (EATSQEKMSGMTSGLPLPPGFKLPF) is disordered. The span at 85–95 (ATSQEKMSGMT) shows a compositional bias: polar residues. Residues 99-108 (PLPPGFKLPF) are compositionally biased toward pro residues.

Belongs to the YbaB/EbfC family. In terms of assembly, homodimer.

Its subcellular location is the cytoplasm. The protein resides in the nucleoid. Functionally, binds to DNA and alters its conformation. May be involved in regulation of gene expression, nucleoid organization and DNA protection. The polypeptide is Nucleoid-associated protein BMASAVP1_A1850 (Burkholderia mallei (strain SAVP1)).